The sequence spans 260 residues: Thiazole synthase (260 aa).

Lys100 acts as the Schiff-base intermediate with DXP in catalysis. 1-deoxy-D-xylulose 5-phosphate-binding positions include Gly161, 187 to 188 (AG), and 209 to 210 (NT).

Belongs to the ThiG family. In terms of assembly, homotetramer. Forms heterodimers with either ThiH or ThiS.

The protein resides in the cytoplasm. The enzyme catalyses [ThiS sulfur-carrier protein]-C-terminal-Gly-aminoethanethioate + 2-iminoacetate + 1-deoxy-D-xylulose 5-phosphate = [ThiS sulfur-carrier protein]-C-terminal Gly-Gly + 2-[(2R,5Z)-2-carboxy-4-methylthiazol-5(2H)-ylidene]ethyl phosphate + 2 H2O + H(+). The protein operates within cofactor biosynthesis; thiamine diphosphate biosynthesis. Its function is as follows. Catalyzes the rearrangement of 1-deoxy-D-xylulose 5-phosphate (DXP) to produce the thiazole phosphate moiety of thiamine. Sulfur is provided by the thiocarboxylate moiety of the carrier protein ThiS. In vitro, sulfur can be provided by H(2)S. The polypeptide is Thiazole synthase (Sorangium cellulosum (strain So ce56) (Polyangium cellulosum (strain So ce56))).